Reading from the N-terminus, the 152-residue chain is Endoribonuclease YbeY (152 aa).

Residues histidine 113, histidine 117, and histidine 123 each contribute to the Zn(2+) site.

Belongs to the endoribonuclease YbeY family. Requires Zn(2+) as cofactor.

The protein localises to the cytoplasm. Functionally, single strand-specific metallo-endoribonuclease involved in late-stage 70S ribosome quality control and in maturation of the 3' terminus of the 16S rRNA. This chain is Endoribonuclease YbeY, found in Pseudoalteromonas atlantica (strain T6c / ATCC BAA-1087).